Reading from the N-terminus, the 344-residue chain is Trace amine-associated receptor 8c (344 aa).

Residues 1 to 36 (MTSNFSQATLQLCYENVNASCIKTPYSPGLRVLLYM) are Extracellular-facing. N-linked (GlcNAc...) asparagine glycosylation is found at Asn4 and Asn18. Disulfide bonds link Cys21–Cys185 and Cys96–Cys189. A helical transmembrane segment spans residues 37–57 (VFGFGAVLAVCGNLLVVISVL). Residues 58-67 (HFKQLHSPAN) lie on the Cytoplasmic side of the membrane. A helical transmembrane segment spans residues 68–88 (FLIASLASADFLVGISVMPFS). The Extracellular portion of the chain corresponds to 89–102 (MVRSIESCWYFGDT). The chain crosses the membrane as a helical span at residues 103–127 (FCSLHSCCDVAFCYSSALHLCFISV). The Cytoplasmic portion of the chain corresponds to 128–146 (DRYIAVTDPLVYPTKFTVS). The helical transmembrane segment at 147-167 (VSGICISISWILPLVYSSAVF) threads the bilayer. Topologically, residues 168–196 (YTGISAMGIENLVSALNCVGGCQVVVNQD) are extracellular. A helical transmembrane segment spans residues 197–217 (WVLISFLLFFIPTLVMIILYS). The Cytoplasmic segment spans residues 218 to 260 (KIFLVAKQQAVKIETSVSGSKGESSLESHKARVAKRERKAAKT). The helical transmembrane segment at 261 to 281 (LGVTVLAFIVSWLPYTIDTLI) threads the bilayer. Residues 282–295 (DAFMGFITPAYVYE) lie on the Extracellular side of the membrane. The helical transmembrane segment at 296–319 (FCCWSAYYNSAMNPLIYAFFYPWF) threads the bilayer. Residues 320-344 (RKAMKLILSGKILKGHSSTTSLFSE) are Cytoplasmic-facing.

The protein belongs to the G-protein coupled receptor 1 family.

It is found in the cell membrane. Olfactory receptor activated by trace amines, such as N-methylpiperidine and N,N-dimethylcyclohexylamine. Trace amine compounds are enriched in animal body fluids and act on trace amine-associated receptors (TAARs) to elicit both intraspecific and interspecific innate behaviors. Ligand-binding causes a conformation change that triggers signaling via G(s)-class of G alpha proteins (GNAL or GNAS). This chain is Trace amine-associated receptor 8c, found in Rattus norvegicus (Rat).